Reading from the N-terminus, the 786-residue chain is MATTKQKVTAPSSSTAPCCPSTSILRREATAAVAGVGDGLQNWNNVPSVDDKQKKTASSALASLASTEPLSSNTSTKGIQIMTRAQTCHPLDPLSAAEISVAVATVRAAGETPEVRDGMRFIEVVLLEPDKSVVALADAYFFPPFQSSLMPRTKGGSLIPTKLPPRRARLIVYNKKTNETSIWIVELNEVHAAARGGHHRGKVISSNVVPDVQPPIDAQEYAECEAVVKSYPPFRDAMRRRGIDDLDLVMVDPWCVGYHSEADAPSRRLAKPLVFCRTESDCPMENGYARPVEGIYVLVDVQNMQIIEFEDRKLVPLPPADPLRNYTAGETRGGVDRSDVKPLHIIQPEGPSFRISGNYIEWQKWNFRIGFTPREGLVIHSVAYLDGSRGRRPIAHRLSFVEMVVPYGDPNDPHYRKNAFDAGEDGLGKNAHSLKRGCDCLGYIKYFDAHFTNFTGGVETTENCVCLHEEDHGMLWKHQDWRTGLAEVRRSRRLTVSFVCTVANYEYAFYWHFYQDGKIEAEVKLTGILSLGALQPGEYRKYGTTILPGLYAPVHQHFFVARMNMAVDCKPGEAHNQVVEVNVKVEEPGKENVHNNAFYAEETLLRSELQAMRDCDPFSARHWIVRNTRTVNRTGQLTGYKLVPGPNCLPLAGPEAKFLRRAAFLKHNLWVTQYAPGEEFPGGEFPNQNPRVGEGLASWVKQDRPLEESDIVLWYIFGITHVPRLEDWPVMPVEHIGFVLQPHGFFNCSPAVDVPPPSACDSESRDSDVTETSVAKSTATSLLAKL.

Position 419–430 (alanine 419–asparagine 430) interacts with substrate. Residue aspartate 421 is the Proton acceptor of the active site. The cysteines at positions 440 and 466 are disulfide-linked. Valine 502–tyrosine 507 contacts substrate. Tyrosine 505 functions as the Schiff-base intermediate with substrate; via topaquinone in the catalytic mechanism. Position 505 is a 2',4',5'-topaquinone (tyrosine 505). Histidine 555 and histidine 557 together coordinate Cu cation. 2 residues coordinate Mn(2+): aspartate 710 and isoleucine 711. Histidine 721 serves as a coordination point for Cu cation.

The protein belongs to the copper/topaquinone oxidase family. In terms of assembly, homodimer. The cofactor is Cu cation. Zn(2+) is required as a cofactor. L-topaquinone serves as cofactor. Post-translationally, topaquinone (TPQ) is generated by copper-dependent autoxidation of a specific tyrosyl residue. Mainly expressed in roots, and, to a lower extent, in leaves and stems.

Its subcellular location is the peroxisome. It carries out the reaction a primary methyl amine + O2 + H2O = an aldehyde + H2O2 + NH4(+). The enzyme catalyses N-methylputrescine + O2 + H2O = 4-methylaminobutanal + H2O2 + NH4(+). It functions in the pathway alkaloid biosynthesis; nicotine biosynthesis. Its pathway is amine and polyamine degradation; putrescine degradation. Involved in putrescine catabolism in peroxisomes. May also be involved in the biosynthesis of pyridine alkaloid natural products, leading mainly to the production of anabasine, anatabine, nicotine and nornicotine, effective deterrents against herbivores with antiparasitic and pesticide properties (neurotoxins); nornicotine serves as the precursor in the synthesis of the carcinogen compound N'-nitrosonornicotine (NNN). Oxidizes preferentially non-N-methylated amines. The polypeptide is Diamine oxidase [copper-containing] 1, peroxisomal (Nicotiana tabacum (Common tobacco)).